The chain runs to 164 residues: ATP synthase B' chain, cyanelle (164 aa).

Residues 26–46 (ATLPVMMVQLLVLMLILNAVF) traverse the membrane as a helical segment.

The protein belongs to the ATPase B chain family. As to quaternary structure, F-type ATPases have 2 components, F(1) - the catalytic core - and F(0) - the membrane proton channel. F(1) has five subunits: alpha(3), beta(3), gamma(1), delta(1), epsilon(1). F(0) has four main subunits: a(1), b(1), b'(1) and c(10-14). The alpha and beta chains form an alternating ring which encloses part of the gamma chain. F(1) is attached to F(0) by a central stalk formed by the gamma and epsilon chains, while a peripheral stalk is formed by the delta, b and b' chains.

The protein resides in the plastid. Its subcellular location is the cyanelle thylakoid membrane. Its function is as follows. F(1)F(0) ATP synthase produces ATP from ADP in the presence of a proton or sodium gradient. F-type ATPases consist of two structural domains, F(1) containing the extramembraneous catalytic core and F(0) containing the membrane proton channel, linked together by a central stalk and a peripheral stalk. During catalysis, ATP synthesis in the catalytic domain of F(1) is coupled via a rotary mechanism of the central stalk subunits to proton translocation. Component of the F(0) channel, it forms part of the peripheral stalk, linking F(1) to F(0). The b'-subunit is a diverged and duplicated form of b found in plants and photosynthetic bacteria. This is ATP synthase B' chain, cyanelle from Cyanophora paradoxa.